The sequence spans 284 residues: Tropomyosin (284 aa).

Positions 1-280 (MDAIKKKMQA…SDELDQTFAE (280 aa)) form a coiled coil.

The protein belongs to the tropomyosin family. In terms of assembly, homodimer.

Functionally, tropomyosin, in association with the troponin complex, plays a central role in the calcium dependent regulation of muscle contraction. The polypeptide is Tropomyosin (Sinonovacula constricta (Razor clam)).